The following is a 176-amino-acid chain: Ribosome maturation factor RimM (176 aa).

The PRC barrel domain maps to 97-176 (EDEFYWRDLI…QILVDWDPDF (80 aa)).

This sequence belongs to the RimM family. Binds ribosomal protein uS19.

It localises to the cytoplasm. Its function is as follows. An accessory protein needed during the final step in the assembly of 30S ribosomal subunit, possibly for assembly of the head region. Essential for efficient processing of 16S rRNA. May be needed both before and after RbfA during the maturation of 16S rRNA. It has affinity for free ribosomal 30S subunits but not for 70S ribosomes. The polypeptide is Ribosome maturation factor RimM (Shewanella putrefaciens (strain CN-32 / ATCC BAA-453)).